The sequence spans 333 residues: CMP-N-acetylneuraminate-beta-galactosamide-alpha-2,3-sialyltransferase 4 (333 aa).

At 1-8 (MTSKSHWK) the chain is on the cytoplasmic side. A helical; Signal-anchor for type II membrane protein membrane pass occupies residues 9-26 (LLALALVLVVVMVWYSIS). Residues 27–333 (REDRYIEFFY…MGAVKNLTYF (307 aa)) lie on the Lumenal side of the membrane. Asparagine 61, asparagine 131, asparagine 310, and asparagine 329 each carry an N-linked (GlcNAc...) asparagine glycan. Cysteine 120 and cysteine 273 are oxidised to a cystine.

Belongs to the glycosyltransferase 29 family. Broadly expressed among tissues with highest levels in the small intestine and colon.

Its subcellular location is the golgi apparatus. It is found in the golgi stack membrane. It carries out the reaction a beta-D-galactosyl-(1-&gt;3)-N-acetyl-beta-D-galactosaminyl derivative + CMP-N-acetyl-beta-neuraminate = an N-acetyl-alpha-neuraminyl-(2-&gt;3)-beta-D-galactosyl-(1-&gt;3)-N-acetyl-beta-D-galactosaminyl derivative + CMP + H(+). The catalysed reaction is a beta-D-galactosyl-(1-&gt;3)-N-acetyl-alpha-D-galactosaminyl derivative + CMP-N-acetyl-beta-neuraminate = an N-acetyl-alpha-neuraminyl-(2-&gt;3)-beta-D-galactosyl-(1-&gt;3)-N-acetyl-alpha-D-galactosaminyl derivative + CMP + H(+). It catalyses the reaction a beta-D-galactosyl-(1-&gt;4)-N-acetyl-beta-D-glucosaminyl derivative + CMP-N-acetyl-beta-neuraminate = an N-acetyl-alpha-neuraminyl-(2-&gt;3)-beta-D-galactosyl-(1-&gt;4)-N-acetyl-beta-D-glucosaminyl derivative + CMP + H(+). The enzyme catalyses a ganglioside GM1 (d18:1(4E)) + CMP-N-acetyl-beta-neuraminate = a ganglioside GD1a (d18:1(4E)) + CMP + H(+). It carries out the reaction a ganglioside GA1 (d18:1(4E)) + CMP-N-acetyl-beta-neuraminate = a ganglioside GM1b (d18:1(4E)) + CMP + H(+). The catalysed reaction is a ganglioside GT1c (d18:1(4E)) + CMP-N-acetyl-beta-neuraminate = a ganglioside GQ1c (d18:1(4E)) + CMP + H(+). It catalyses the reaction a neolactoside nLc4Cer + CMP-N-acetyl-beta-neuraminate = a neolactoside IV(3)-alpha-NeuAc-nLc4Cer + CMP + H(+). The enzyme catalyses a neolactoside nLc4Cer(d18:1(4E)) + CMP-N-acetyl-beta-neuraminate = a neolactoside IV(3)-alpha-NeuAc-nLc4Cer(d18:1(4E)) + CMP + H(+). It functions in the pathway protein modification; protein glycosylation. Functionally, a beta-galactoside alpha2-3 sialyltransferase involved in terminal sialylation of glycoproteins and glycolipids. Catalyzes the transfer of sialic acid (N-acetyl-neuraminic acid; Neu5Ac) from the nucleotide sugar donor CMP-Neu5Ac onto acceptor Galbeta-(1-&gt;3)-GalNAc- and Galbeta-(1-&gt;4)-GlcNAc-terminated glycoconjugates through an alpha2-3 linkage. Plays a major role in hemostasis. Responsible for sialylation of plasma VWF/von Willebrand factor, preventing its recognition by asialoglycoprotein receptors (ASGPR) and subsequent clearance. Regulates ASGPR-mediated clearance of platelets. Participates in the biosynthesis of the sialyl Lewis X epitopes, both on O- and N-glycans, which are recognized by SELE/E-selectin, SELP/P-selectin and SELL/L-selectin. Essential for selectin-mediated rolling and adhesion of leukocytes during extravasation. Contributes to adhesion and transendothelial migration of neutrophils likely through terminal sialylation of CXCR2. In glycosphingolipid biosynthesis, sialylates GM1 and GA1 gangliosides to form GD1a and GM1b, respectively. Metabolizes brain c-series ganglioside GT1c forming GQ1c. Synthesizes ganglioside LM1 (IV3Neu5Ac-nLc4Cer), a major structural component of peripheral nerve myelin. This chain is CMP-N-acetylneuraminate-beta-galactosamide-alpha-2,3-sialyltransferase 4 (St3gal4), found in Mus musculus (Mouse).